Here is a 129-residue protein sequence, read N- to C-terminus: Glycine cleavage system H protein (129 aa).

The region spanning 24–106 (IAVIGITAYA…YGDGWLIKVR (83 aa)) is the Lipoyl-binding domain. Position 65 is an N6-lipoyllysine (Lys65).

Belongs to the GcvH family. The glycine cleavage system is composed of four proteins: P, T, L and H. It depends on (R)-lipoate as a cofactor.

Its function is as follows. The glycine cleavage system catalyzes the degradation of glycine. The H protein shuttles the methylamine group of glycine from the P protein to the T protein. The sequence is that of Glycine cleavage system H protein from Synechococcus sp. (strain JA-3-3Ab) (Cyanobacteria bacterium Yellowstone A-Prime).